A 363-amino-acid chain; its full sequence is Neutral protease 2 homolog MEP7 (363 aa).

An N-terminal signal peptide occupies residues 1–19 (MLLCSMVAALAALATPAFS). A propeptide spanning residues 20 to 181 (CALPHLDLPE…ARAIQPLDRR (162 aa)) is cleaved from the precursor. Cystine bridges form between cysteine 187–cysteine 259 and cysteine 266–cysteine 284. Histidine 308 contributes to the Zn(2+) binding site. The active site involves glutamate 309. Residues histidine 312 and aspartate 323 each coordinate Zn(2+).

It belongs to the peptidase M35 family. Requires Zn(2+) as cofactor.

It is found in the secreted. The enzyme catalyses Preferential cleavage of bonds with hydrophobic residues in P1'. Also 3-Asn-|-Gln-4 and 8-Gly-|-Ser-9 bonds in insulin B chain.. Its function is as follows. Secreted metalloproteinase that allows assimilation of proteinaceous substrates. Shows high activities on basic nuclear substrates such as histone and protamine. May be involved in virulence. This is Neutral protease 2 homolog MEP7 (MEP7) from Coccidioides posadasii (strain C735) (Valley fever fungus).